Reading from the N-terminus, the 1203-residue chain is DNA-directed RNA polymerase subunit beta' (1203 aa).

Residues Cys-60, Cys-62, Cys-75, and Cys-78 each contribute to the Zn(2+) site. Positions 449, 451, and 453 each coordinate Mg(2+). The Zn(2+) site is built by Cys-818, Cys-892, Cys-899, and Cys-902.

This sequence belongs to the RNA polymerase beta' chain family. As to quaternary structure, the RNAP catalytic core consists of 2 alpha, 1 beta, 1 beta' and 1 omega subunit. When a sigma factor is associated with the core the holoenzyme is formed, which can initiate transcription. Mg(2+) is required as a cofactor. The cofactor is Zn(2+).

The catalysed reaction is RNA(n) + a ribonucleoside 5'-triphosphate = RNA(n+1) + diphosphate. DNA-dependent RNA polymerase catalyzes the transcription of DNA into RNA using the four ribonucleoside triphosphates as substrates. This Bacillus cereus (strain ATCC 14579 / DSM 31 / CCUG 7414 / JCM 2152 / NBRC 15305 / NCIMB 9373 / NCTC 2599 / NRRL B-3711) protein is DNA-directed RNA polymerase subunit beta'.